Consider the following 102-residue polypeptide: Small ribosomal subunit protein uS10 (102 aa).

The protein belongs to the universal ribosomal protein uS10 family. As to quaternary structure, part of the 30S ribosomal subunit.

Its function is as follows. Involved in the binding of tRNA to the ribosomes. In Rhizobium meliloti (strain 1021) (Ensifer meliloti), this protein is Small ribosomal subunit protein uS10.